A 465-amino-acid chain; its full sequence is UDP-N-acetylmuramate--L-alanine ligase (465 aa).

112–118 is an ATP binding site; that stretch reads GTHGKTT.

Belongs to the MurCDEF family.

It localises to the cytoplasm. It carries out the reaction UDP-N-acetyl-alpha-D-muramate + L-alanine + ATP = UDP-N-acetyl-alpha-D-muramoyl-L-alanine + ADP + phosphate + H(+). It participates in cell wall biogenesis; peptidoglycan biosynthesis. Its function is as follows. Cell wall formation. The protein is UDP-N-acetylmuramate--L-alanine ligase of Burkholderia thailandensis (strain ATCC 700388 / DSM 13276 / CCUG 48851 / CIP 106301 / E264).